Here is a 350-residue protein sequence, read N- to C-terminus: Biotin synthase (350 aa).

The 228-residue stretch at 41-268 folds into the Radical SAM core domain; it reads NEVQISRLLS…LSRVRLSAGR (228 aa). Positions 56, 60, and 63 each coordinate [4Fe-4S] cluster. Positions 100, 131, 191, and 263 each coordinate [2Fe-2S] cluster.

This sequence belongs to the radical SAM superfamily. Biotin synthase family. Homodimer. The cofactor is [4Fe-4S] cluster. [2Fe-2S] cluster serves as cofactor.

It carries out the reaction (4R,5S)-dethiobiotin + (sulfur carrier)-SH + 2 reduced [2Fe-2S]-[ferredoxin] + 2 S-adenosyl-L-methionine = (sulfur carrier)-H + biotin + 2 5'-deoxyadenosine + 2 L-methionine + 2 oxidized [2Fe-2S]-[ferredoxin]. Its pathway is cofactor biosynthesis; biotin biosynthesis; biotin from 7,8-diaminononanoate: step 2/2. Catalyzes the conversion of dethiobiotin (DTB) to biotin by the insertion of a sulfur atom into dethiobiotin via a radical-based mechanism. The protein is Biotin synthase of Shewanella putrefaciens (strain CN-32 / ATCC BAA-453).